The chain runs to 609 residues: Proteasome-associated ATPase (609 aa).

The interval 1–27 (MGSSERSEAFGTPRESDMSSGDEAELE) is disordered. Positions 17 to 96 (DMSSGDEAEL…LREEVDRLGQ (80 aa)) form a coiled coil. An ATP-binding site is contributed by 296–301 (GCGKTL). Residues 608-609 (YL) are docks into pockets in the proteasome alpha-ring.

This sequence belongs to the AAA ATPase family. In terms of assembly, homohexamer. Assembles into a hexameric ring structure that caps the 20S proteasome core. Strongly interacts with the prokaryotic ubiquitin-like protein Pup through a hydrophobic interface; the interacting region of ARC lies in its N-terminal coiled-coil domain. There is one Pup binding site per ARC hexamer ring. Upon ATP-binding, the C-terminus of ARC interacts with the alpha-rings of the proteasome core, possibly by binding to the intersubunit pockets.

It functions in the pathway protein degradation; proteasomal Pup-dependent pathway. ATPase which is responsible for recognizing, binding, unfolding and translocation of pupylated proteins into the bacterial 20S proteasome core particle. May be essential for opening the gate of the 20S proteasome via an interaction with its C-terminus, thereby allowing substrate entry and access to the site of proteolysis. Thus, the C-termini of the proteasomal ATPase may function like a 'key in a lock' to induce gate opening and therefore regulate proteolysis. The chain is Proteasome-associated ATPase from Mycobacterium avium (strain 104).